We begin with the raw amino-acid sequence, 87 residues long: Large ribosomal subunit protein bL28 (87 aa).

Belongs to the bacterial ribosomal protein bL28 family.

In Methylacidiphilum infernorum (isolate V4) (Methylokorus infernorum (strain V4)), this protein is Large ribosomal subunit protein bL28.